Consider the following 299-residue polypeptide: Tyrosine recombinase XerC (299 aa).

Residues 1–85 (MERQLEAYCA…AVRGLYRYLN (85 aa)) form the Core-binding (CB) domain. Residues 106–285 (RLPKVLDTDR…DFQHLAAVYD (180 aa)) form the Tyr recombinase domain. Residues Arg-146, Lys-170, His-237, Arg-240, and His-263 contribute to the active site. Tyr-272 (O-(3'-phospho-DNA)-tyrosine intermediate) is an active-site residue.

This sequence belongs to the 'phage' integrase family. XerC subfamily. As to quaternary structure, forms a cyclic heterotetrameric complex composed of two molecules of XerC and two molecules of XerD.

Its subcellular location is the cytoplasm. Its function is as follows. Site-specific tyrosine recombinase, which acts by catalyzing the cutting and rejoining of the recombining DNA molecules. The XerC-XerD complex is essential to convert dimers of the bacterial chromosome into monomers to permit their segregation at cell division. It also contributes to the segregational stability of plasmids. The polypeptide is Tyrosine recombinase XerC (Pseudomonas putida (strain W619)).